We begin with the raw amino-acid sequence, 298 residues long: Homoserine kinase (298 aa).

Pro-83–Ser-93 provides a ligand contact to ATP.

The protein belongs to the GHMP kinase family. Homoserine kinase subfamily.

The protein resides in the cytoplasm. The enzyme catalyses L-homoserine + ATP = O-phospho-L-homoserine + ADP + H(+). It participates in amino-acid biosynthesis; L-threonine biosynthesis; L-threonine from L-aspartate: step 4/5. Functionally, catalyzes the ATP-dependent phosphorylation of L-homoserine to L-homoserine phosphate. In Clostridium botulinum (strain Eklund 17B / Type B), this protein is Homoserine kinase.